The primary structure comprises 179 residues: Natural killer cells antigen CD94 (179 aa).

The Cytoplasmic portion of the chain corresponds to M1–N10. Residues L11 to L31 form a helical; Signal-anchor for type II membrane protein membrane-spanning segment. Over K32 to M179 the chain is Extracellular. Cystine bridges form between C58/C70, C61/C72, C89/C174, and C152/C166. The region spanning H68–K175 is the C-type lectin domain. 2 N-linked (GlcNAc...) asparagine glycosylation sites follow: N93 and N125.

Can form disulfide-bonded heterodimer with NKG2 family members KLRC1 and KLRC2. KLRD1-KLRC1 heterodimer interacts with peptide-bound MHC-E-B2M heterotrimeric complex. KLRD1 plays a prominent role in directly interacting with MHC-E. KLRD1-KLRC1 interacts with much higher affinity with peptide-bound MHC-E-B2M than KLRD1-KLRC2. Interacts with the adapter protein TYROBP/DAP12; this interaction is required for cell surface expression and cell activation.

It localises to the cell membrane. Immune receptor involved in self-nonself discrimination. In complex with KLRC1 or KLRC2 on cytotoxic and regulatory lymphocyte subsets, recognizes non-classical major histocompatibility (MHC) class Ib molecule MHC-E loaded with self-peptides derived from the signal sequence of classical MHC class Ia and non-classical MHC class Ib molecules. Enables cytotoxic cells to monitor the expression of MHC class I molecules in healthy cells and to tolerate self. Primarily functions as a ligand binding subunit as it lacks the capacity to signal. Its function is as follows. KLRD1-KLRC1 acts as an immune inhibitory receptor. Key inhibitory receptor on natural killer (NK) cells that regulates their activation and effector functions. Dominantly counteracts T cell receptor signaling on a subset of memory/effector CD8-positive T cells as part of an antigen-driven response to avoid autoimmunity. On intraepithelial CD8-positive gamma-delta regulatory T cells triggers TGFB1 secretion, which in turn limits the cytotoxic programming of intraepithelial CD8-positive alpha-beta T cells, distinguishing harmless from pathogenic antigens. In MHC-E-rich tumor microenvironment, acts as an immune inhibitory checkpoint and may contribute to progressive loss of effector functions of NK cells and tumor-specific T cells, a state known as cell exhaustion. Upon MHC-E-peptide binding, transmits intracellular signals through KLRC1 immunoreceptor tyrosine-based inhibition motifs (ITIMs) by recruiting INPP5D/SHIP-1 and INPPL1/SHIP-2 tyrosine phosphatases to ITIMs, and ultimately opposing signals transmitted by activating receptors through dephosphorylation of proximal signaling molecules. In terms of biological role, KLRD1-KLRC2 acts as an immune activating receptor. On cytotoxic lymphocyte subsets recognizes MHC-E loaded with signal sequence-derived peptides from non-classical MHC class Ib MHC-G molecules, likely playing a role in the generation and effector functions of adaptive NK cells and in maternal-fetal tolerance during pregnancy. Regulates the effector functions of terminally differentiated cytotoxic lymphocyte subsets, and in particular may play a role in adaptive NK cell response to viral infection. Upon MHC-E-peptide binding, transmits intracellular signals via the adapter protein TYROBP/DAP12, triggering the phosphorylation of proximal signaling molecules and cell activation. The protein is Natural killer cells antigen CD94 (KLRD1) of Canis lupus familiaris (Dog).